A 332-amino-acid chain; its full sequence is Ferredoxin--NADP reductase (332 aa).

The FAD site is built by threonine 20, glutamate 39, glutamine 47, tyrosine 52, valine 92, phenylalanine 126, aspartate 288, and serine 329.

Belongs to the ferredoxin--NADP reductase type 2 family. As to quaternary structure, homodimer. FAD serves as cofactor.

The catalysed reaction is 2 reduced [2Fe-2S]-[ferredoxin] + NADP(+) + H(+) = 2 oxidized [2Fe-2S]-[ferredoxin] + NADPH. The chain is Ferredoxin--NADP reductase from Geobacillus thermodenitrificans (strain NG80-2).